Consider the following 33-residue polypeptide: Cytochrome b6-f complex subunit 5 (33 aa).

The chain crosses the membrane as a helical span at residues leucine 5 to alanine 25.

The protein belongs to the PetG family. In terms of assembly, the 4 large subunits of the cytochrome b6-f complex are cytochrome b6, subunit IV (17 kDa polypeptide, PetD), cytochrome f and the Rieske protein, while the 4 small subunits are PetG, PetL, PetM and PetN. The complex functions as a dimer.

The protein resides in the plastid. It localises to the chloroplast thylakoid membrane. In terms of biological role, component of the cytochrome b6-f complex, which mediates electron transfer between photosystem II (PSII) and photosystem I (PSI), cyclic electron flow around PSI, and state transitions. PetG is required for either the stability or assembly of the cytochrome b6-f complex. This is Cytochrome b6-f complex subunit 5 from Bigelowiella natans (Pedinomonas minutissima).